A 481-amino-acid polypeptide reads, in one-letter code: Argininosuccinate lyase (481 aa).

This sequence belongs to the lyase 1 family. Argininosuccinate lyase subfamily.

Its subcellular location is the cytoplasm. The catalysed reaction is 2-(N(omega)-L-arginino)succinate = fumarate + L-arginine. Its pathway is amino-acid biosynthesis; L-arginine biosynthesis; L-arginine from L-ornithine and carbamoyl phosphate: step 3/3. The polypeptide is Argininosuccinate lyase (Kineococcus radiotolerans (strain ATCC BAA-149 / DSM 14245 / SRS30216)).